The sequence spans 223 residues: Ion-translocating oxidoreductase complex subunit E (223 aa).

7 helical membrane passes run 17-37, 38-58, 68-88, 91-111, 124-144, 156-176, and 181-201; these read SLVQ…TINA, IGLG…ISIL, IPIY…LLHA, FNLY…CIVV, VISF…MFVI, FLFG…FTFI, and TIIL…VIAF.

It belongs to the NqrDE/RnfAE family. In terms of assembly, the complex is composed of six subunits: RnfA, RnfB, RnfC, RnfD, RnfE and RnfG.

It is found in the cell inner membrane. Its function is as follows. Part of a membrane-bound complex that couples electron transfer with translocation of ions across the membrane. In Buchnera aphidicola subsp. Schizaphis graminum (strain Sg), this protein is Ion-translocating oxidoreductase complex subunit E.